We begin with the raw amino-acid sequence, 1020 residues long: Glucan endo-1,3-beta-D-glucosidase (1020 aa).

Positions 1-25 (MKGKNVQLLFALVVIILLFPTGASA) are cleaved as a signal peptide. The beta-sandwich subdomain stretch occupies residues 28 to 251 (HAVSVGKGSY…ADYIAIAKLP (224 aa)). A GH81 domain is found at 28-722 (HAVSVGKGSY…HWIHNLAELG (695 aa)). The interval 252–350 (EKDGNMLAKF…EGKRFTTELT (99 aa)) is alpha/beta subdomain. The (alpha/beta)6 barrel subdomain stretch occupies residues 360–722 (DLGDYDRERL…HWIHNLAELG (363 aa)). Residues Tyr-387, Lys-391, His-458, Asp-466, His-470, Asp-530, Asn-540, Glu-542, Glu-546, Glu-699, and Arg-704 each coordinate (1,3-beta-D-glucosyl)n. The active site involves Asp-466. Catalysis depends on residues Glu-542 and Glu-546. Residues 771–790 (HSFNIGNGDGPTNPDPSEPD) form a disordered region. Residues 796-922 (ERIQAEAYDA…LMNVNWFVFR (127 aa)) enclose the CBM6 domain. (1,3-beta-D-glucosyl)n is bound by residues Glu-812, Trp-825, Asp-853, Asn-878, Asp-912, and Asn-915. The region spanning 928 to 1020 (NGDSHTHPDY…YTTEWFTYSR (93 aa)) is the CBM56 domain.

It belongs to the glycosyl hydrolase 81 family.

Its subcellular location is the secreted. The catalysed reaction is Hydrolysis of (1-&gt;3)-beta-D-glucosidic linkages in (1-&gt;3)-beta-D-glucans.. Functionally, cleaves internal linkages in 1,3-beta-glucan. May contribute to plant biomass degradation. This chain is Glucan endo-1,3-beta-D-glucosidase, found in Halalkalibacterium halodurans (strain ATCC BAA-125 / DSM 18197 / FERM 7344 / JCM 9153 / C-125) (Bacillus halodurans).